The sequence spans 789 residues: Potassium transporter 4 (789 aa).

The Cytoplasmic segment spans residues 1–32; sequence MAPAESGVSPRRNPSQLSWMNLSSNLILAYQS. Serine 9 is modified (phosphoserine). A helical membrane pass occupies residues 33 to 53; the sequence is FGVVYGDLSTSPLYVFPSTFI. Over 54–68 the chain is Extracellular; that stretch reads GKLHKHHNEDAVFGA. The chain crosses the membrane as a helical span at residues 69-89; that stretch reads FSLIFWTLTLIPLLKYLLVLL. Residues 90–154 lie on the Cytoplasmic side of the membrane; sequence SADDNGEGGT…FLEKHKRLRT (65 aa). A helical transmembrane segment spans residues 155-175; the sequence is ALLLVVLFGAAMVIGDGVLTP. Residues 176 to 195 lie on the Extracellular side of the membrane; that stretch reads ALSVLSSLSGLQATEKNVTD. A helical membrane pass occupies residues 196 to 216; it reads GELLVLACVILVGLFALQHCG. At 217-219 the chain is on the cytoplasmic side; that stretch reads THR. Residues 220 to 240 form a helical membrane-spanning segment; sequence VAFMFAPIVIIWLISIFFIGL. The Extracellular segment spans residues 241 to 270; that stretch reads YNIIRWNPKIIHAVSPLYIIKFFRVTGQDG. The chain crosses the membrane as a helical span at residues 271 to 291; it reads WISLGGVLLSVTGTEAMFANL. Residues 292 to 300 lie on the Cytoplasmic side of the membrane; that stretch reads GHFTSVSIR. A helical transmembrane segment spans residues 301 to 321; sequence VAFAVVVYPCLVVQYMGQAAF. Residues 322–340 are Extracellular-facing; sequence LSKNLGSIPNSFYDSVPDP. A helical membrane pass occupies residues 341–361; the sequence is VFWPVFVIATLAAIVGSQAVI. Residues 362 to 392 lie on the Cytoplasmic side of the membrane; sequence TTTFSIIKQCHALGCFPRIKVVHTSKHIYGQ. The chain crosses the membrane as a helical span at residues 393–413; it reads IYIPEINWILMILTLAMAIGF. The Extracellular segment spans residues 414 to 424; that stretch reads RDTTLIGNAYG. Residues 425-445 traverse the membrane as a helical segment; sequence IACMVVMFITTFFMALVIVVV. Residues 446-450 are Cytoplasmic-facing; the sequence is WQKSC. A helical transmembrane segment spans residues 451 to 471; sequence FLAALFLGTLWIIEGVYLSAA. The Extracellular portion of the chain corresponds to 472–478; sequence LMKVTEG. The helical transmembrane segment at 479–499 threads the bilayer; sequence GWVPFVLTFIFMIAMYVWHYG. Residues 500–789 are Cytoplasmic-facing; sequence TRRKYSFDLH…LIEVGMIYYV (290 aa).

Belongs to the HAK/KUP transporter (TC 2.A.72.3) family. In terms of tissue distribution, detected at very low levels in roots, stems, leaves and flowers of mature plants and strongly expressed in the roots of potassium-starved plants.

It localises to the cell membrane. Its function is as follows. High-affinity potassium transporter. This Arabidopsis thaliana (Mouse-ear cress) protein is Potassium transporter 4 (POT4).